The chain runs to 202 residues: Translation initiation factor IF-3 (202 aa).

Belongs to the IF-3 family. In terms of assembly, monomer.

It is found in the cytoplasm. IF-3 binds to the 30S ribosomal subunit and shifts the equilibrium between 70S ribosomes and their 50S and 30S subunits in favor of the free subunits, thus enhancing the availability of 30S subunits on which protein synthesis initiation begins. The chain is Translation initiation factor IF-3 from Prochlorococcus marinus (strain MIT 9211).